A 361-amino-acid polypeptide reads, in one-letter code: Phospho-N-acetylmuramoyl-pentapeptide-transferase (361 aa).

10 helical membrane passes run 28 to 48 (LSMFTSMFVVLLIGTPFIKFF), 70 to 90 (IGTPTMGGVLILLGLFSGILL), 94 to 114 (LSNYHIWFLLFIVSGFGLLGA), 129 to 149 (VSFKFKIISQILIAIVGIYGL), 169 to 189 (LIINLGWFFIPFSIFIIVGSS), 205 to 225 (PVILVAACFAFISYVTGNIVF), 237 to 257 (MGEVSVFCGSIIGACLGFLWF), 264 to 284 (IFMGDTGSLALGGSLGAIGII), 289 to 309 (IVLAITGGLFVLEAVSVIIQV), and 338 to 358 (TVVIRFWIISIILAMIGLATL).

The protein belongs to the glycosyltransferase 4 family. MraY subfamily. Mg(2+) serves as cofactor.

The protein localises to the cell inner membrane. It catalyses the reaction UDP-N-acetyl-alpha-D-muramoyl-L-alanyl-gamma-D-glutamyl-meso-2,6-diaminopimeloyl-D-alanyl-D-alanine + di-trans,octa-cis-undecaprenyl phosphate = di-trans,octa-cis-undecaprenyl diphospho-N-acetyl-alpha-D-muramoyl-L-alanyl-D-glutamyl-meso-2,6-diaminopimeloyl-D-alanyl-D-alanine + UMP. The protein operates within cell wall biogenesis; peptidoglycan biosynthesis. In terms of biological role, catalyzes the initial step of the lipid cycle reactions in the biosynthesis of the cell wall peptidoglycan: transfers peptidoglycan precursor phospho-MurNAc-pentapeptide from UDP-MurNAc-pentapeptide onto the lipid carrier undecaprenyl phosphate, yielding undecaprenyl-pyrophosphoryl-MurNAc-pentapeptide, known as lipid I. This Pelagibacter ubique (strain HTCC1062) protein is Phospho-N-acetylmuramoyl-pentapeptide-transferase.